The chain runs to 258 residues: Venom plasminogen activator LV-PA (258 aa).

The first 18 residues, 1–18 (MVLITVLANLLILQLSYA), serve as a signal peptide directing secretion. Residues 19–24 (QKSSKL) constitute a propeptide that is removed on maturation. Positions 25–249 (VFGGDECNIN…YTDWIQSIIA (225 aa)) constitute a Peptidase S1 domain. Asparagine 44 is a glycosylation site (N-linked (GlcNAc...) asparagine). The cysteines at positions 50 and 66 are disulfide-linked. Catalysis depends on charge relay system residues histidine 65 and aspartate 110. Intrachain disulfides connect cysteine 142-cysteine 210, cysteine 174-cysteine 189, and cysteine 200-cysteine 225. The Charge relay system role is filled by serine 204.

Belongs to the peptidase S1 family. Snake venom subfamily. Monomer. In terms of processing, N-glycosylated. PubMed:17034951 shows that it contains approximately 10% carbohydrates, PubMed:10871053 shows that it contains approximately 20% carbohydrates. As to expression, expressed by the venom gland.

The protein localises to the secreted. With respect to regulation, inhibited by the serine protease inhibitors NPGB, PMSF, p-aminobenzamidine and aprotinin. Not inhibited by soybean trypsin inhibitor or EDTA. Snake venom serine protease that activates plasminogen. Weakly hydrolyzes the alpha chain of human fibrinogen without releasing fibrinopeptide A. Does not hydrolyze plasma kallikrein or factor Xa. Does not clot fibrinogen. Does not affect platelet function. Induces hypotensive effects on rats. Shows a preferential cleavage at Lys-|-Xaa over Arg-|-Xaa bonds. This is Venom plasminogen activator LV-PA from Lachesis muta muta (Bushmaster).